The primary structure comprises 255 residues: Microfibril-associated glycoprotein 4 (255 aa).

An N-terminal signal peptide occupies residues 1–21 (MKALLALPLLLLLSTPPCAPQ). A Cell attachment site motif is present at residues 26-28 (RGD). Positions 32-255 (RFCLQQPLDC…KRTEMKIRRA (224 aa)) constitute a Fibrinogen C-terminal domain. Asparagine 87 and asparagine 137 each carry an N-linked (GlcNAc...) asparagine glycan.

In terms of assembly, homodimer. Can also form higher oligomers. Interacts with FBN1, FBN2 and LOX. Interacts with COL1A1 in a Ca (2+)-dependent manner. Interacts with ELN in a Ca (2+)-dependent manner; this interaction promotes ELN self-assembly.

The protein localises to the secreted. It is found in the extracellular space. The protein resides in the extracellular matrix. In terms of biological role, could be involved in calcium-dependent cell adhesion or intercellular interactions. May contribute to the elastic fiber assembly and/or maintenance. The sequence is that of Microfibril-associated glycoprotein 4 (MFAP4) from Homo sapiens (Human).